A 1139-amino-acid chain; its full sequence is Solute carrier family 12 member 5 (1139 aa).

Disordered regions lie at residues 1 to 62 and 95 to 116; these read MSRR…KGRE and PQGS…KPVQ. The Cytoplasmic segment spans residues 1 to 98; it reads MSRRFTVTSL…ANYTNLPQGS (98 aa). The span at 21 to 45 shows a compositional bias: basic and acidic residues; it reads PESRRHSVADPRRLPREDVKGDGNP. Over residues 46–55 the composition is skewed to polar residues; sequence KESSPFINST. Thr57 carries the post-translational modification Phosphothreonine. The span at 98–111 shows a compositional bias: basic and acidic residues; it reads SKEHEEAENNEGGK. A discontinuously helical membrane pass occupies residues 99-120; it reads KEHEEAENNEGGKKKPVQAPRM. Lys113 is a binding site for K(+). Residues 121 to 129 lie on the Extracellular side of the membrane; it reads GTFMGVYLP. Residues 130–151 traverse the membrane as a helical segment; it reads CLQNIFGVILFLRLTWVVGIAG. The Cytoplasmic segment spans residues 152 to 174; the sequence is IMESFCMVFICCSCTMLTAISMS. The chain crosses the membrane as a helical span at residues 175–203; that stretch reads AIATNGVVPAGGSYYMISRSLGPEFGGAV. Position 184 (Ala184) interacts with chloride. Topologically, residues 204-229 are extracellular; sequence GLCFYLGTTFAGAMYILGTIEILLAY. 2 helical membrane passes run 230–250 and 251–276; these read LFPA…AAML and NNMR…KYVN. Topologically, residues 277-402 are extracellular; the sequence is KFALVFLGCV…ERRGMPSVGL (126 aa). A disulfide bridge connects residues Cys310 and Cys325. Asn314, Asn333, Asn351, and Asn362 each carry an N-linked (GlcNAc...) asparagine glycan. A disulfide bridge links Cys345 with Cys354. Residues 403–420 traverse the membrane as a helical segment; that stretch reads ADGTPVDMDHPYVFSDMT. Met410 is a K(+) binding site. Tyr414 and Val415 together coordinate chloride. The Cytoplasmic segment spans residues 421-429; the sequence is SYFTLLVGI. The chain crosses the membrane as a helical span at residues 430–453; sequence YFPSVTGIMAGSNRSGDLRDAQKS. K(+) is bound at residue Asp446. The Extracellular portion of the chain corresponds to 454–485; it reads IPTGTILAIATTSAVYISSVVLFGACIEGVVL. The helical transmembrane segment at 486–513 threads the bilayer; that stretch reads RDKFGEAVNGNLVVGTLAWPSPWVIVIG. Residues 514-534 lie on the Cytoplasmic side of the membrane; the sequence is SFFSTCGAGLQSLTGAPRLLQ. The next 2 membrane-spanning stretches (helical) occupy residues 535-555 and 556-578; these read AISR…KANG and EPTW…ASLD. Glu569 lines the chloride pocket. The Cytoplasmic portion of the chain corresponds to 579–592; it reads EVAPILSMFFLMCY. Transmembrane regions (helical) follow at residues 593 to 615 and 616 to 632; these read MFVN…PRFR and YYHW…CLAL. The Cytoplasmic segment spans residues 633 to 1139; sequence MFICSWYYAL…GGREVITIYS (507 aa). Residues 667-681 are scissor helix; sequence GIRGLSLSAARYALL. Thr929 is subject to Phosphothreonine; by OXSR1 and STK39. The segment at 943–1025 is disordered; the sequence is HLTKNERERE…PEGEGETDPE (83 aa). Residues 945-962 are compositionally biased toward basic and acidic residues; the sequence is TKNEREREIQSITDESRG. The segment covering 982–994 has biased composition (acidic residues); that stretch reads TACDNEEKPEEEV. Positions 1003–1012 are enriched in low complexity; it reads PSCPSSSPSP. A Phosphothreonine; by OXSR1 and STK39 modification is found at Thr1030. Positions 1033–1052 are disordered; the sequence is KDKSAAQKNKGPSPVSSEGI. Phosphoserine occurs at positions 1045, 1048, and 1049.

Belongs to the SLC12A transporter family. K/Cl co-transporter subfamily. Homodimer; adopts a domain-swap conformation at the scissor helices connecting the transmembrane domain and C-terminal domain. Heterodimer wHeterodimer with K-Cl cotransporters SLC12A6 and SLC12A7. Interacts with AP2A1. Phosphorylated at Thr-929 and Thr-1030 by OXSR1/OSR1 and STK39/SPAK downstream of WNK kinases (WNK1, WNK2, WNK3 or WNK4), inhibiting the potassium-chloride cotransport activity. Highly expressed in brain. Not detected in other tissues. Highly expressed in pyramidal neurons and in neurons throughout the cortex, hippocampus, the granular layer of the cerebellum and in groups of neurons throughout the brainstem. Barely detectable in dorsal-root ganglions.

The protein resides in the cell membrane. It localises to the cell projection. It is found in the dendrite. It catalyses the reaction K(+)(in) + chloride(in) = K(+)(out) + chloride(out). With respect to regulation, inhibited following phosphorylation by OXSR1/OSR1 and STK39/SPAK: phosphorylation takes place downstream of WNK kinases (WNK1, WNK2, WNK3 or WNK4) in response to hyperosmotic stress and subsequent cell shrinkage. Mediates electroneutral potassium-chloride cotransport in mature neurons and is required for neuronal Cl(-) homeostasis. As major extruder of intracellular chloride, it establishes the low neuronal Cl(-) levels required for chloride influx after binding of GABA-A and glycine to their receptors, with subsequent hyperpolarization and neuronal inhibition. Involved in the regulation of dendritic spine formation and maturation. This Rattus norvegicus (Rat) protein is Solute carrier family 12 member 5 (Slc12a5).